The primary structure comprises 185 residues: Ribosome-recycling factor (185 aa).

Belongs to the RRF family.

The protein resides in the cytoplasm. Functionally, responsible for the release of ribosomes from messenger RNA at the termination of protein biosynthesis. May increase the efficiency of translation by recycling ribosomes from one round of translation to another. In Campylobacter jejuni (strain RM1221), this protein is Ribosome-recycling factor.